A 101-amino-acid polypeptide reads, in one-letter code: NADH-quinone oxidoreductase subunit K (101 aa).

Helical transmembrane passes span 4–24 (LAHYLVLGAILFAISIVGIFL), 30–50 (IIILMAIELMLLAVNTNFVAF), and 61–81 (IFVFFVLTVAAAEAAIGLAIL).

This sequence belongs to the complex I subunit 4L family. NDH-1 is composed of 14 different subunits. Subunits NuoA, H, J, K, L, M, N constitute the membrane sector of the complex.

It is found in the cell inner membrane. It catalyses the reaction a quinone + NADH + 5 H(+)(in) = a quinol + NAD(+) + 4 H(+)(out). Its function is as follows. NDH-1 shuttles electrons from NADH, via FMN and iron-sulfur (Fe-S) centers, to quinones in the respiratory chain. The immediate electron acceptor for the enzyme in this species is believed to be ubiquinone. Couples the redox reaction to proton translocation (for every two electrons transferred, four hydrogen ions are translocated across the cytoplasmic membrane), and thus conserves the redox energy in a proton gradient. The protein is NADH-quinone oxidoreductase subunit K of Paraburkholderia xenovorans (strain LB400).